The chain runs to 416 residues: UDP-N-acetylglucosamine 1-carboxyvinyltransferase (416 aa).

22–23 (KN) is a binding site for phosphoenolpyruvate. Arg91 is a binding site for UDP-N-acetyl-alpha-D-glucosamine. The active-site Proton donor is Cys115. Cys115 carries the 2-(S-cysteinyl)pyruvic acid O-phosphothioketal modification. UDP-N-acetyl-alpha-D-glucosamine is bound by residues 120 to 124 (RPIDL), Asp303, and Ile325.

Belongs to the EPSP synthase family. MurA subfamily.

The protein resides in the cytoplasm. It catalyses the reaction phosphoenolpyruvate + UDP-N-acetyl-alpha-D-glucosamine = UDP-N-acetyl-3-O-(1-carboxyvinyl)-alpha-D-glucosamine + phosphate. It functions in the pathway cell wall biogenesis; peptidoglycan biosynthesis. Functionally, cell wall formation. Adds enolpyruvyl to UDP-N-acetylglucosamine. In Lawsonia intracellularis (strain PHE/MN1-00), this protein is UDP-N-acetylglucosamine 1-carboxyvinyltransferase.